The sequence spans 300 residues: Cation-efflux pump FieF (300 aa).

The chain crosses the membrane as a helical span at residues leucine 24–valine 44. Residues aspartate 45 and aspartate 49 each contribute to the Zn(2+) site. A run of 2 helical transmembrane segments spans residues alanine 82–isoleucine 102 and proline 114–phenylalanine 134. Residues histidine 153 and aspartate 157 each contribute to the Zn(2+) site. 2 helical membrane passes run serine 156–histidine 176 and alanine 178–glycine 198.

Belongs to the cation diffusion facilitator (CDF) transporter (TC 2.A.4) family. FieF subfamily. In terms of assembly, homodimer.

Its subcellular location is the cell inner membrane. The catalysed reaction is Zn(2+)(in) + H(+)(out) = Zn(2+)(out) + H(+)(in). It catalyses the reaction Cd(2+)(in) + H(+)(out) = Cd(2+)(out) + H(+)(in). It carries out the reaction Fe(2+)(in) + H(+)(out) = Fe(2+)(out) + H(+)(in). Divalent metal cation transporter which exports Zn(2+), Cd(2+) and possibly Fe(2+). May be involved in zinc and iron detoxification by efflux. In Salmonella enteritidis PT4 (strain P125109), this protein is Cation-efflux pump FieF.